Consider the following 311-residue polypeptide: MKVTIVGAGNVGATCADVISYRGIASEVVLLDIKEGFAEGKALDIMQCATNTGFNTKVSGVTNDYSKTAGSDVVVITSGIPRKPGMTREELIGINAGIVKTVAENVLKHSPNTIIVVVSNPMDTMTYLALKATGVPKNRIIGMGGALDSSRFRTYLSLALDKPANDISAMVIGGHGDTTMIPLTRLASYNGIPVTEFLSEEVLQKVAADTMVGGATLTGLLGTSAWYAPGASVAYLVDSILNDQKKMIACSVFVEGEYGQNDICIGVPCIIGKNGVEEILDIKLNDQEKALFAKSADAVRGMNDALKSILV.

NAD(+) is bound by residues 7 to 12 (GAGNVG) and D32. Substrate contacts are provided by R82 and R88. NAD(+)-binding positions include N95 and 118 to 120 (VSN). Substrate is bound by residues N120 and R151. H175 serves as the catalytic Proton acceptor.

It belongs to the LDH/MDH superfamily. MDH type 3 family. In terms of assembly, homotetramer.

The catalysed reaction is (S)-malate + NAD(+) = oxaloacetate + NADH + H(+). Its activity is regulated as follows. Strongly inhibited by iodoacetic acid and CuCl(2). Completely inhibited by N-ethylmaleimide and HgCl(2). Catalyzes the reversible oxidation of malate to oxaloacetate. Can use both NAD and NADP for malate oxidation, but NADPH cannot be used for oxaloacetate reduction. This chain is Malate dehydrogenase, found in Flavobacterium frigidimaris.